A 1000-amino-acid chain; its full sequence is Putative methyl-accepting chemotaxis protein sll0041 (1000 aa).

A disordered region spans residues 1–59; it reads MTQNPSSDRRPDTAQSVANGETLDGALFTGLTDTAAAQDESSETSASFATIDGEDKSEV. GAF domains are found at residues 342-478 and 509-650; these read EIQG…QTTL and NSEQ…GLAL. Residues 671-722 form the HAMP domain; that stretch reads EKMQKRALELLMEVDPVSRGDLTIRAHVTEDEIGTIADSYNATIESLRRIVT. The Methyl-accepting transducer domain occupies 727–963; sequence AASQFTETTD…SVTQTMALVA (237 aa).

This sequence belongs to the methyl-accepting chemotaxis (MCP) protein family.

This Synechocystis sp. (strain ATCC 27184 / PCC 6803 / Kazusa) protein is Putative methyl-accepting chemotaxis protein sll0041.